We begin with the raw amino-acid sequence, 369 residues long: Peptide chain release factor 1 (369 aa).

An N5-methylglutamine modification is found at Gln238.

It belongs to the prokaryotic/mitochondrial release factor family. Methylated by PrmC. Methylation increases the termination efficiency of RF1.

It is found in the cytoplasm. In terms of biological role, peptide chain release factor 1 directs the termination of translation in response to the peptide chain termination codons UAG and UAA. The protein is Peptide chain release factor 1 of Parabacteroides distasonis (strain ATCC 8503 / DSM 20701 / CIP 104284 / JCM 5825 / NCTC 11152).